Here is a 54-residue protein sequence, read N- to C-terminus: Ovomucoid (54 aa).

A Kazal-like domain is found at 4-54 (VDCSEYPKPVCSLEYMPLCGSDSQTYSNECNFCNAVVDSNGTLTLSHFGKC). 3 cysteine pairs are disulfide-bonded: Cys-6–Cys-36, Cys-14–Cys-33, and Cys-22–Cys-54. N-linked (GlcNAc...) asparagine glycosylation occurs at Asn-43.

It localises to the secreted. The protein is Ovomucoid of Caracara plancus (Southern caracara).